The primary structure comprises 464 residues: MGKRLLDKLWEKHVVTTNENGLDLLYIDLHLVHEVTSPQAFEGLRLTNRKVRRPDLTFATMDHNIPTKDVWNITDRIAKQQLDTLRENCKQFQVPLADIGDEEQGIVHVIGPELGLTQPGKTIVCGDSHTATHGAFGALAFGIGTSEVEHVLATQTLWQRKPKAMGIELKGKLQKGVYAKDIILHLLSKYGVAVGTGYVMEFYGETIGAMEMEERMTLCNMAIEGGAKAGIIAPDEKTFAYVKGRKYAPRDYETFEKKWSELYTDADAIYDLHISIDVTDLAPYVTWGTNPSMGVRIDEKLPEKHDVNDERAFSYMGLSPGQSTYDIPVQHVFIGSCTNSRLSDLEIAAAVVKGRKVKEGVRALVVPGSKRVRDAAMQKGLHHIFEEAGFEWREPGCSMCLGMNPDQVPEGEHCASTSNRNFEGRQGKGARTHLVSPAMAAAAALYGHFVDTRKESYDGAISYS.

[4Fe-4S] cluster contacts are provided by cysteine 337, cysteine 397, and cysteine 400.

Belongs to the aconitase/IPM isomerase family. LeuC type 1 subfamily. Heterodimer of LeuC and LeuD. [4Fe-4S] cluster is required as a cofactor.

It carries out the reaction (2R,3S)-3-isopropylmalate = (2S)-2-isopropylmalate. It participates in amino-acid biosynthesis; L-leucine biosynthesis; L-leucine from 3-methyl-2-oxobutanoate: step 2/4. Functionally, catalyzes the isomerization between 2-isopropylmalate and 3-isopropylmalate, via the formation of 2-isopropylmaleate. The protein is 3-isopropylmalate dehydratase large subunit of Bacillus cereus (strain ZK / E33L).